Reading from the N-terminus, the 468-residue chain is Uronate isomerase (468 aa).

It belongs to the metallo-dependent hydrolases superfamily. Uronate isomerase family.

It carries out the reaction D-glucuronate = D-fructuronate. The catalysed reaction is aldehydo-D-galacturonate = keto-D-tagaturonate. It functions in the pathway carbohydrate metabolism; pentose and glucuronate interconversion. The protein is Uronate isomerase of Marinomonas sp. (strain MWYL1).